The sequence spans 280 residues: Virginiamycin B lyase (280 aa).

His-215 serves as a coordination point for substrate. Residue Glu-254 participates in Mg(2+) binding. The Proton acceptor role is filled by His-256. Residue Glu-271 coordinates Mg(2+).

It belongs to the Vgb family. Monomer. It depends on Mg(2+) as a cofactor.

Its function is as follows. Inactivates the type B streptogramin antibiotics by linearizing the lactone ring at the ester linkage, generating a free phenylglycine carboxylate and converting the threonyl moiety into 2-amino-butenoic acid. This chain is Virginiamycin B lyase, found in Mycobacterium sp. (strain JLS).